The sequence spans 295 residues: 4-hydroxy-tetrahydrodipicolinate synthase (295 aa).

Threonine 46 serves as a coordination point for pyruvate. Tyrosine 134 serves as the catalytic Proton donor/acceptor. The active-site Schiff-base intermediate with substrate is lysine 162. A pyruvate-binding site is contributed by isoleucine 205.

It belongs to the DapA family. Homotetramer; dimer of dimers.

It localises to the cytoplasm. The catalysed reaction is L-aspartate 4-semialdehyde + pyruvate = (2S,4S)-4-hydroxy-2,3,4,5-tetrahydrodipicolinate + H2O + H(+). It participates in amino-acid biosynthesis; L-lysine biosynthesis via DAP pathway; (S)-tetrahydrodipicolinate from L-aspartate: step 3/4. Functionally, catalyzes the condensation of (S)-aspartate-beta-semialdehyde [(S)-ASA] and pyruvate to 4-hydroxy-tetrahydrodipicolinate (HTPA). The polypeptide is 4-hydroxy-tetrahydrodipicolinate synthase (Anaeromyxobacter sp. (strain K)).